A 557-amino-acid chain; its full sequence is Phosphoribosylaminoimidazole carboxylase, chloroplastic (557 aa).

The 186-residue stretch at 108-293 (KVALLPAWIP…QFEQHLPAVV (186 aa)) folds into the ATP-grasp domain. 132 to 189 (WDSLDIHFMIKSRRLAYDGRGNFVAKSEEELSSAVDALGGFDRGLYAEKWAPFVKELA) serves as a coordination point for ATP. Positions 387-557 (CSTLLGFIMG…HGWESYLKNS (171 aa)) are AIR carboxylase catalytic subunit.

In the C-terminal section; belongs to the AIR carboxylase family. Class I subfamily.

Its subcellular location is the plastid. The protein localises to the chloroplast. The enzyme catalyses 5-amino-1-(5-phospho-D-ribosyl)imidazole-4-carboxylate + H(+) = 5-amino-1-(5-phospho-beta-D-ribosyl)imidazole + CO2. The protein operates within purine metabolism; IMP biosynthesis via de novo pathway; 5-amino-1-(5-phospho-D-ribosyl)imidazole-4-carboxylate from 5-amino-1-(5-phospho-D-ribosyl)imidazole (carboxylase route): step 1/1. The sequence is that of Phosphoribosylaminoimidazole carboxylase, chloroplastic (PURKE) from Vigna aconitifolia (Moth bean).